Consider the following 196-residue polypeptide: Homeobox protein ANF-1 (196 aa).

Residues 119-178 (GRRPRTAFTRNQIEVLENVFKMNSYPGIDIREELARKLDLEEDRIQIWFQNRRAKLKRSH) constitute a DNA-binding region (homeobox).

The protein belongs to the ANF homeobox family.

It localises to the nucleus. May be involved in the early patterning of the most anterior region of the main embryonic body axis. The protein is Homeobox protein ANF-1 of Gallus gallus (Chicken).